The chain runs to 509 residues: Maturase K (509 aa).

The protein belongs to the intron maturase 2 family. MatK subfamily.

It is found in the plastid. Its subcellular location is the chloroplast. In terms of biological role, usually encoded in the trnK tRNA gene intron. Probably assists in splicing its own and other chloroplast group II introns. This chain is Maturase K, found in Citrus sinensis (Sweet orange).